The primary structure comprises 94 residues: DNA-binding protein HU (94 aa).

The protein belongs to the bacterial histone-like protein family. In terms of assembly, homodimer.

Histone-like DNA-binding protein which is capable of wrapping DNA to stabilize it, and thus to prevent its denaturation under extreme environmental conditions. The protein is DNA-binding protein HU (hup) of Helicobacter pylori (strain J99 / ATCC 700824) (Campylobacter pylori J99).